Here is a 290-residue protein sequence, read N- to C-terminus: Acetyl-coenzyme A carboxylase carboxyl transferase subunit beta (290 aa).

The CoA carboxyltransferase N-terminal domain occupies 28-290 (IMTKCPKCKK…TGGEYEWLQD (263 aa)). The Zn(2+) site is built by Cys-32, Cys-35, Cys-51, and Cys-54. Residues 32–54 (CPKCKKIMLTKELDKNLRVCMNC) form a C4-type zinc finger.

The protein belongs to the AccD/PCCB family. As to quaternary structure, acetyl-CoA carboxylase is a heterohexamer composed of biotin carboxyl carrier protein (AccB), biotin carboxylase (AccC) and two subunits each of ACCase subunit alpha (AccA) and ACCase subunit beta (AccD). It depends on Zn(2+) as a cofactor.

Its subcellular location is the cytoplasm. It carries out the reaction N(6)-carboxybiotinyl-L-lysyl-[protein] + acetyl-CoA = N(6)-biotinyl-L-lysyl-[protein] + malonyl-CoA. Its pathway is lipid metabolism; malonyl-CoA biosynthesis; malonyl-CoA from acetyl-CoA: step 1/1. Its function is as follows. Component of the acetyl coenzyme A carboxylase (ACC) complex. Biotin carboxylase (BC) catalyzes the carboxylation of biotin on its carrier protein (BCCP) and then the CO(2) group is transferred by the transcarboxylase to acetyl-CoA to form malonyl-CoA. This chain is Acetyl-coenzyme A carboxylase carboxyl transferase subunit beta, found in Bacillus velezensis (strain DSM 23117 / BGSC 10A6 / LMG 26770 / FZB42) (Bacillus amyloliquefaciens subsp. plantarum).